The primary structure comprises 305 residues: Heme A synthase (305 aa).

Residues 1 to 6 lie on the Cytoplasmic side of the membrane; the sequence is MKKFLK. Residues 7 to 27 form a helical membrane-spanning segment; that stretch reads VWSVLTIICMTVVVFGGALVT. The Extracellular segment spans residues 28 to 63; that stretch reads KTGSADGCGNSWPLCNGQLVRLTDVTPEKLIEFMHR. Residues C35 and C42 are joined by a disulfide bond. The active site involves E59. H62 is a heme o binding site. A helical transmembrane segment spans residues 64 to 84; sequence MTTGISSIFVIVLAICAWIYM. Residues 85 to 92 lie on the Cytoplasmic side of the membrane; that stretch reads KNRRETKP. Residues 93-113 traverse the membrane as a helical segment; the sequence is LAIIAVLFLIIQALMGMAAVV. Residues 114-122 are Extracellular-facing; the sequence is WGQNPYIMA. A helical transmembrane segment spans residues 123 to 143; the sequence is LHFGISIICYASIVLLALMIF. H124 lines the heme o pocket. Topologically, residues 144–160 are cytoplasmic; sequence EVDRKFDARNLVMGTKL. A helical membrane pass occupies residues 161–181; it reads RINIYALTIYTYLAVYTGALV. Residues 182-212 are Extracellular-facing; the sequence is RHEKASMAVPVWPFENGKFIMPDSVQDYVQY. The chain crosses the membrane as a helical span at residues 213-233; that stretch reads FHRVAAFILIVWLLYVTWLVF. H214 contacts heme b. Residues 234–240 are Cytoplasmic-facing; the sequence is RDYRRYR. The helical transmembrane segment at 241–261 threads the bilayer; sequence VLTFSMVLSLLFIALQAVTGA. Topologically, residues 262-271 are extracellular; it reads LSVYTGVNLY. Residues 272–292 form a helical membrane-spanning segment; it reads IALAHSLIITMLFALLCYLCL. H276 provides a ligand contact to heme b. The Cytoplasmic segment spans residues 293–305; that stretch reads LASRSKSNRLRIK.

This sequence belongs to the COX15/CtaA family. Type 1 subfamily. In terms of assembly, interacts with CtaB. Heme b is required as a cofactor.

It localises to the cell membrane. The catalysed reaction is Fe(II)-heme o + 2 A + H2O = Fe(II)-heme a + 2 AH2. The protein operates within porphyrin-containing compound metabolism; heme A biosynthesis; heme A from heme O: step 1/1. In terms of biological role, catalyzes the conversion of heme O to heme A by two successive hydroxylations of the methyl group at C8. The first hydroxylation forms heme I, the second hydroxylation results in an unstable dihydroxymethyl group, which spontaneously dehydrates, resulting in the formyl group of heme A. This Listeria welshimeri serovar 6b (strain ATCC 35897 / DSM 20650 / CCUG 15529 / CIP 8149 / NCTC 11857 / SLCC 5334 / V8) protein is Heme A synthase.